The chain runs to 109 residues: Aquaporin-2 (109 aa).

At 1–6 the chain is on the cytoplasmic side; the sequence is SVAFSR. A helical membrane pass occupies residues 7 to 27; the sequence is AVFAEFLATLLFVFFGLGSAL. The Extracellular segment spans residues 28–35; it reads NWPQALPS. Residues 36-54 traverse the membrane as a helical segment; the sequence is VLQIAMAFGLGIGTLVQAL. The Cytoplasmic portion of the chain corresponds to 55–59; that stretch reads GHVSG. Residues 60–69 constitute an intramembrane region (discontinuously helical); the sequence is AHINPAVTVA. An NPA 1 motif is present at residues 63-65; it reads NPA. Over 70 to 80 the chain is Cytoplasmic; sequence CLVGCHVSFLR. A helical transmembrane segment spans residues 81–102; it reads AAFYVAAQLLGAVAGAALLHEI. Residues 103–109 are Extracellular-facing; that stretch reads TPPHVRG.

This sequence belongs to the MIP/aquaporin (TC 1.A.8) family. In terms of assembly, homotetramer. Post-translationally, serine phosphorylation is necessary and sufficient for expression at the apical membrane. Endocytosis is not phosphorylation-dependent. In terms of processing, N-glycosylated.

It is found in the apical cell membrane. The protein resides in the basolateral cell membrane. Its subcellular location is the cell membrane. The protein localises to the cytoplasmic vesicle membrane. It localises to the golgi apparatus. It is found in the trans-Golgi network membrane. It catalyses the reaction H2O(in) = H2O(out). It carries out the reaction glycerol(in) = glycerol(out). Functionally, forms a water-specific channel that provides the plasma membranes of renal collecting duct with high permeability to water, thereby permitting water to move in the direction of an osmotic gradient. Plays an essential role in renal water homeostasis. Could also be permeable to glycerol. This is Aquaporin-2 from Canis lupus familiaris (Dog).